We begin with the raw amino-acid sequence, 529 residues long: Glucose transporter 2A (529 aa).

The tract at residues 1-22 (MTERRDNVSHAPDAIEGPNDGA) is disordered. At 1 to 43 (MTERRDNVSHAPDAIEGPNDGAHAEDTSPGFFSFENLGVAQVQ) the chain is on the cytoplasmic side. The helical transmembrane segment at 44-64 (VVGGTLNGFSIGFVAVYILLY) threads the bilayer. The Extracellular segment spans residues 65 to 119 (EVATNCSLFKTTEACKAVGSYGCEWKDTEVCSWKKECDSDSDGVNPCESLIGYSS). A helical transmembrane segment spans residues 120–140 (LYSGIFASAMIVGSMVGSIIA). Over 141 to 152 (GKCITMFGLKKS) the chain is Cytoplasmic. A helical transmembrane segment spans residues 153–173 (FIIVGVMSVVASALNHISVAT). Over 174 to 175 (NE) the chain is Extracellular. Residues 176 to 196 (FWVLCAGRVLMGIGLGVVCVI) traverse the membrane as a helical segment. The Cytoplasmic portion of the chain corresponds to 197-214 (CPMYVNENAHPKLSKVDG). The chain crosses the membrane as a helical span at residues 215–235 (VLFQVFITFGIMLAAMLGLIL). Residues 236–250 (DKTVNYDNDPDMAGR) lie on the Extracellular side of the membrane. The chain crosses the membrane as a helical span at residues 251–271 (FHGFCAVSSVLSVAMFLVGMF). Topologically, residues 272-300 (LRESTATFSQDDDGKADGGMDPNEYGWGQ) are cytoplasmic. The chain crosses the membrane as a helical span at residues 301-321 (MLWPLFMGAVTAGTLQLTGIN). Topologically, residues 322–339 (AVMNYAPKITENLGMDPS) are extracellular. A helical membrane pass occupies residues 340-360 (LGNFLVMAWNFVTSLVAIPLA). Residues 361–368 (SRFTMRQM) are Cytoplasmic-facing. The chain crosses the membrane as a helical span at residues 369-389 (FITCSFVASCMCLFLCGIPVF). At 390 to 404 (PGVAEEKVKNGVATT) the chain is on the extracellular side. The chain crosses the membrane as a helical span at residues 405 to 425 (GIALFIAAFEFGVGSCFFVLA). At 426-439 (QDLFPPSFRPKGSS) the chain is on the cytoplasmic side. The chain crosses the membrane as a helical span at residues 440 to 460 (FVVMMQFIFNILINLLYPITT). Over 461–476 (EAISGGATGDQDKGQA) the chain is Extracellular. A helical membrane pass occupies residues 477-497 (VVFILFGLIGLICFVLQFFYL). At 498–529 (YPYDANQDHENDHGTEPVERILSPVDVPTPRN) the chain is on the cytoplasmic side. The segment at 508–529 (NDHGTEPVERILSPVDVPTPRN) is disordered.

The protein belongs to the major facilitator superfamily. Sugar transporter (TC 2.A.1.1) family.

It localises to the membrane. Facilitative glucose transporter. This chain is Glucose transporter 2A (THT2A), found in Trypanosoma brucei brucei.